Reading from the N-terminus, the 814-residue chain is Syn-copalyl diphosphate synthase TPS3, chloroplastic (814 aa).

The transit peptide at 1-52 directs the protein to the chloroplast; sequence MCSLSTLSPNFSNAYGSKSVSSTASRFPCWQRSNETWKTQSREVIHWTYVVR. Lys-248 contributes to the substrate binding site. The Mg(2+) site is built by Asp-386 and Asp-388. A DXDD motif motif is present at residues 386 to 389; it reads DIDD. Substrate is bound at residue Lys-472.

This sequence belongs to the terpene synthase family. The cofactor is Mg(2+). As to expression, mostly expressed in trichomes of leaves and fruits.

It is found in the plastid. Its subcellular location is the chloroplast. The catalysed reaction is (2E,6E,10E)-geranylgeranyl diphosphate = 9alpha-copalyl diphosphate. Its pathway is secondary metabolite biosynthesis; terpenoid biosynthesis. Its function is as follows. Involved in the biosynthesis of labdane-type diterpenoid including cleroda-dienols, and peregrinol lactones and furan derivatives, dopaminergic diterpenoids that can bind to dopamine receptors in the human pituitary gland, have probably ability to lower prolactin levels, and are used to treat menstrual cycle disorders (e.g. premenstrual syndrome and mastodynia). Terpene synthase that produces syn-copalyl diphosophate from geranylgeranyl diphosphate (GGPP). The polypeptide is Syn-copalyl diphosphate synthase TPS3, chloroplastic (Vitex agnus-castus (Chaste tree)).